Consider the following 115-residue polypeptide: Na(+)/H(+) antiporter subunit C1 (115 aa).

3 consecutive transmembrane segments (helical) span residues 1-21 (MEII…YLVL), 28-48 (IIMG…TMGG), and 72-92 (LILT…VLAF).

The protein belongs to the CPA3 antiporters (TC 2.A.63) subunit C family. In terms of assembly, may form a heterooligomeric complex that consists of seven subunits: mnhA1, mnhB1, mnhC1, mnhD1, mnhE1, mnhF1 and mnhG1.

The protein localises to the cell membrane. Functionally, mnh complex is a Na(+)/H(+) antiporter involved in Na(+) excretion. The sequence is that of Na(+)/H(+) antiporter subunit C1 (mnhC1) from Staphylococcus epidermidis (strain ATCC 35984 / DSM 28319 / BCRC 17069 / CCUG 31568 / BM 3577 / RP62A).